The primary structure comprises 537 residues: Cytochrome P450 monooxygenase ltmQ (537 aa).

A helical transmembrane segment spans residues 10–30 (FPKLNFATIVISGATIIGIIF). Asparagine 182, asparagine 188, and asparagine 310 each carry an N-linked (GlcNAc...) asparagine glycan. Cysteine 476 serves as a coordination point for heme.

It belongs to the cytochrome P450 family. Heme serves as cofactor.

It is found in the membrane. It functions in the pathway secondary metabolite biosynthesis. Cytochrome P450 monooxygenase; part of the gene clusters that mediates the biosynthesis of lolitrems, indole-diterpene mycotoxins that are potent tremorgens in mammals, and are synthesized by clavicipitaceous fungal endophytes in association with their grass hosts. The geranylgeranyl diphosphate (GGPP) synthase ltmG is proposed to catalyze the first step in lolitrem biosynthesis. LtmG catalyzes a series of iterative condensations of isopentenyl diphosphate (IPP) with dimethylallyl diphosphate (DMAPP), geranyl diphosphate (GPP), and farnesyl diphosphate (FPP), to form GGPP. GGPP then condenses with indole-3-glycerol phosphate to form 3-geranylgeranylindole, an acyclic intermediate, to be incorporated into paxilline. Either ltmG or ltmC could be responsible for this step, as both are putative prenyl transferases. The FAD-dependent monooxygenase ltmM then catalyzes the epoxidation of the two terminal alkenes of the geranylgeranyl moiety, which is subsequently cyclized by ltmB, to paspaline. The cytochrome P450 monooxygenases ltmQ and ltmP can sequentially oxidize paspaline to terpendole E and terpendole F. Alternatively, ltmP converts paspaline to an intermediate which is oxidized by ltmQ to terpendole F. LtmF, ltmK, ltmE and ltmJ appear to be unique to the epichloe endophytes. The prenyltransferase ltmF is involved in the 27-hydroxyl-O-prenylation. The cytochrome P450 monooxygenase ltmK is required for the oxidative acetal ring formation. The multi-functional prenyltransferase ltmE is required for C20- and C21-prenylations of the indole ring of paspalanes and acts together with the cytochrome P450 monooxygenase ltmJ to yield lolitremanes by multiple oxidations and ring closures. The stereoisomer pairs of lolitriol and lolitrem N or lolitrem B and lolitrem F may be attributed to variations in the way in which ring closure can occur under the action of ltmJ. While the major product of this pathway is lolitrem B, the prenyl transferases and cytochrome P450 monooxygenases identified in this pathway have a remarkable versatility in their regio- and stereo-specificities to generate a diverse range of metabolites that are products of a metabolic grid rather than a linear pathway. The sequence is that of Cytochrome P450 monooxygenase ltmQ from Epichloe festucae var. lolii (Neotyphodium lolii).